Reading from the N-terminus, the 467-residue chain is Glutamate--tRNA ligase (467 aa).

The 'HIGH' region signature appears at 9–19 (PSPTGYLHIGG). Positions 237–241 (KLSKR) match the 'KMSKS' region motif. An ATP-binding site is contributed by Lys240.

This sequence belongs to the class-I aminoacyl-tRNA synthetase family. Glutamate--tRNA ligase type 1 subfamily. In terms of assembly, monomer.

The protein resides in the cytoplasm. The enzyme catalyses tRNA(Glu) + L-glutamate + ATP = L-glutamyl-tRNA(Glu) + AMP + diphosphate. In terms of biological role, catalyzes the attachment of glutamate to tRNA(Glu) in a two-step reaction: glutamate is first activated by ATP to form Glu-AMP and then transferred to the acceptor end of tRNA(Glu). The sequence is that of Glutamate--tRNA ligase from Xanthomonas campestris pv. campestris (strain B100).